Consider the following 318-residue polypeptide: Polyprenal reductase (318 aa).

Topologically, residues M1–W19 are cytoplasmic. A helical transmembrane segment spans residues L20–L40. Residues P41–Y80 lie on the Lumenal side of the membrane. Residues I81–G101 form a helical membrane-spanning segment. Over V102 to Q119 the chain is Cytoplasmic. Residues F120–S140 form a helical membrane-spanning segment. Residues L141–T156 lie on the Lumenal side of the membrane. The chain crosses the membrane as a helical span at residues V157–V177. The Cytoplasmic portion of the chain corresponds to L178–N194. A helical membrane pass occupies residues L195–V215. The Lumenal segment spans residues H216 to S265. The helical transmembrane segment at M266–F286 threads the bilayer. Residues S287–F318 lie on the Cytoplasmic side of the membrane.

It belongs to the steroid 5-alpha reductase family. Polyprenal reductase subfamily.

The protein localises to the endoplasmic reticulum membrane. The enzyme catalyses a di-trans,poly-cis-dolichal + NADP(+) = a di-trans,poly-cis-polyprenal + NADPH + H(+). It carries out the reaction a 3-oxo-5alpha-steroid + NADP(+) = a 3-oxo-Delta(4)-steroid + NADPH + H(+). The catalysed reaction is androst-4-ene-3,17-dione + NADPH + H(+) = 5alpha-androstan-3,17-dione + NADP(+). It catalyses the reaction 17beta-hydroxy-5alpha-androstan-3-one + NADP(+) = testosterone + NADPH + H(+). It functions in the pathway protein modification; protein glycosylation. In terms of biological role, plays a key role in early steps of protein N-linked glycosylation by being involved in the conversion of polyprenol into dolichol. Acts as a polyprenal reductase that mediates the reduction of polyprenal into dolichal in a NADP-dependent mechanism. Dolichols are required for the synthesis of dolichol-linked monosaccharides and the oligosaccharide precursor used for N-glycosylation. Also able to convert testosterone (T) into 5-alpha-dihydrotestosterone (DHT). This is Polyprenal reductase (SRD5A3) from Ailuropoda melanoleuca (Giant panda).